A 218-amino-acid polypeptide reads, in one-letter code: Claudin-5 (218 aa).

Residues 1–7 are Cytoplasmic-facing; the sequence is MGSAALE. A helical membrane pass occupies residues 8–28; sequence ILGLVLCLVGWGGLILACGLP. Topologically, residues 29–81 are extracellular; sequence MWQVTAFLDHNIVTAQTTWKGLWMSCVVQSTGHMQCKVYDSVLALSTEVQAAR. Residues 82–102 traverse the membrane as a helical segment; it reads ALTVSAVLLAFVALFVTLAGA. Residues 103 to 122 are Cytoplasmic-facing; it reads QCTTCVAPGPAKARVALTGG. The chain crosses the membrane as a helical span at residues 123 to 143; that stretch reads VLYLFCGLLALVPLCWFANIV. Over 144-159 the chain is Extracellular; sequence VREFYDPSVPVSQKYE. Residues 160-180 traverse the membrane as a helical segment; sequence LGAALYIGWAATALLMVGGCL. The Cytoplasmic segment spans residues 181–218; the sequence is LCCGAWVCTGRPDLSFPVKYSAPRRPTATGDYDKKNYV. The interval 217 to 218 is interactions with TJP1, TJP2 and TJP3; that stretch reads YV.

It belongs to the claudin family. Directly interacts with TJP1/ZO-1, TJP2/ZO-2 and TJP3/ZO-3. Interacts with MPDZ.

It is found in the cell junction. It localises to the tight junction. The protein resides in the cell membrane. Its function is as follows. Plays a major role in tight junction-specific obliteration of the intercellular space. This Homo sapiens (Human) protein is Claudin-5 (CLDN5).